A 114-amino-acid chain; its full sequence is Probable 4-amino-4-deoxy-L-arabinose-phosphoundecaprenol flippase subunit ArnE (114 aa).

3 helical membrane-spanning segments follow: residues L38–L58, L64–A84, and L94–L114. Residues L43–W112 enclose the EamA domain.

The protein belongs to the ArnE family. In terms of assembly, heterodimer of ArnE and ArnF.

Its subcellular location is the cell inner membrane. It functions in the pathway bacterial outer membrane biogenesis; lipopolysaccharide biosynthesis. Its function is as follows. Translocates 4-amino-4-deoxy-L-arabinose-phosphoundecaprenol (alpha-L-Ara4N-phosphoundecaprenol) from the cytoplasmic to the periplasmic side of the inner membrane. The polypeptide is Probable 4-amino-4-deoxy-L-arabinose-phosphoundecaprenol flippase subunit ArnE (Yersinia pseudotuberculosis serotype O:3 (strain YPIII)).